The primary structure comprises 612 residues: Indole-3-acetic acid-amido synthetase GH3.6 (612 aa).

It belongs to the IAA-amido conjugating enzyme family. As to expression, expressed in cotyledons, stipules, true leaves, hypocotyls, and all parts of the roots. Not detected in flowers.

Catalyzes the synthesis of indole-3-acetic acid (IAA)-amino acid conjugates, providing a mechanism for the plant to cope with the presence of excess auxin. Strongly reactive with Glu, Gln, Trp, Asp, Ala, Leu, Phe, Gly, Tyr, Met, Ile and Val. Little or no product formation with His, Ser, Thr, Arg, Lys, or Cys. Also active on pyruvic and butyric acid analogs of IAA, PAA and the synthetic auxin naphthaleneacetic acid (NAA). The two chlorinated synthetic auxin herbicides 2,4-D and 3,6-dichloro-o-anisic acid (dicamba) cannot be used as substrates. Involved in auxin signal transduction. Inhibits shoot and hypocotyl cell elongation, and lateral root cell differentiation in light. This Arabidopsis thaliana (Mouse-ear cress) protein is Indole-3-acetic acid-amido synthetase GH3.6 (GH3.6).